A 244-amino-acid chain; its full sequence is Exosome complex component Rrp41 (244 aa).

Belongs to the RNase PH family. Rrp41 subfamily. In terms of assembly, component of the archaeal exosome complex. Forms a hexameric ring-like arrangement composed of 3 Rrp41-Rrp42 heterodimers. The hexameric ring associates with a trimer of Rrp4 and/or Csl4 subunits.

The protein resides in the cytoplasm. Its function is as follows. Catalytic component of the exosome, which is a complex involved in RNA degradation. Has 3'-&gt;5' exoribonuclease activity. Can also synthesize heteromeric RNA-tails. This Nitrosopumilus maritimus (strain SCM1) protein is Exosome complex component Rrp41.